Here is a 294-residue protein sequence, read N- to C-terminus: Nucleotide-binding protein Adeh_0147 (294 aa).

17 to 24 (GVSGSGKS) lines the ATP pocket. 68–71 (DARE) contributes to the GTP binding site.

It belongs to the RapZ-like family.

In terms of biological role, displays ATPase and GTPase activities. In Anaeromyxobacter dehalogenans (strain 2CP-C), this protein is Nucleotide-binding protein Adeh_0147.